The chain runs to 1960 residues: Zinc finger protein 638 (1960 aa).

Residues 1–137 (MSRPRFNPRG…SPKVQSRYTK (137 aa)) are disordered. Positions 19 to 31 (APNPPGMRPPGPF) are enriched in pro residues. Arg47, Arg49, and Arg54 each carry asymmetric dimethylarginine. The segment covering 60-75 (SYQNMGPQRMNVQVTQ) has biased composition (polar residues). Positions 76–89 (HRTDPRLTKEKLDF) are enriched in basic and acidic residues. Positions 117–137 (KQSSVTQVTEQSPKVQSRYTK) are enriched in polar residues. Phosphoserine occurs at positions 128 and 288. A Glycyl lysine isopeptide (Lys-Gly) (interchain with G-Cter in SUMO2) cross-link involves residue Lys291. A phosphoserine mark is found at Ser298, Ser367, Ser381, and Ser418. A disordered region spans residues 352–373 (KSVISSADAHGGPTESKKDYQS). 3 disordered regions span residues 463–673 (NPEI…QSLS), 749–804 (PGKK…STVK), and 827–899 (KASI…KESE). A compositionally biased stretch (basic and acidic residues) spans 468 to 483 (PSRRNESNRKENETPR). Residues 470 to 573 (RRNESNRKEN…ERTSRKSVRS (104 aa)) are involved in localization to nuclear speckles. Over residues 484-556 (RRSHSPSPRH…SRNLLRRSPK (73 aa)) the composition is skewed to basic residues. Ser554 carries the phosphoserine modification. Basic and acidic residues-rich tracts occupy residues 565–583 (RTSR…EDGG) and 591–602 (EVTKQKHTETVD). Phosphoserine is present on residues Ser606 and Ser615. Low complexity predominate over residues 618–628 (KPSAKSLSSVK). At Ser637 the chain carries Phosphoserine. One can recognise an RRM 1 domain in the interval 676 to 751 (SILLVSELPE…KSVKVCVPGK (76 aa)). Residues 755–782 (QNKEMKKKPSDIKKSSASALKKETDASK) show a composition bias toward basic and acidic residues. Lys775 participates in a covalent cross-link: Glycyl lysine isopeptide (Lys-Gly) (interchain with G-Cter in SUMO2). Over residues 783 to 802 (TMETVSSSSSAKSGQIKSST) the composition is skewed to low complexity. Composition is skewed to basic and acidic residues over residues 838–854 (KSLE…KDSN), 867–879 (ASSE…KSAE), and 888–899 (ATEKEPVNKESE). Residues 902–976 (SVVFISNLPN…NQLSISMAPE (75 aa)) form the RRM 2 domain. The span at 1082 to 1092 (SEVQRKNDLEL) shows a compositional bias: basic and acidic residues. Disordered stretches follow at residues 1082 to 1151 (SEVQ…EEPK), 1396 to 1420 (TVVS…PKPV), 1442 to 1462 (TRSG…GVNR), 1484 to 1527 (TKQS…KSKE), and 1550 to 1583 (PSQA…KGKT). At Ser1099 the chain carries Phosphoserine. Positions 1140–1151 (VHQEELGKEEPK) are enriched in basic and acidic residues. Residues 1399–1409 (SSPKAKSTPSK) show a composition bias toward low complexity. Ser1400 is modified (phosphoserine). Over residues 1442–1459 (TRSGLAESNSKSKPTQIG) the composition is skewed to polar residues. Basic and acidic residues-rich tracts occupy residues 1484–1503 (TKQS…DDSN) and 1518–1527 (TTDRSSKSKE). Phosphoserine occurs at positions 1635 and 1661. Disordered stretches follow at residues 1763–1898 (EVGD…SDVP) and 1930–1960 (KSTR…RSSR). The segment covering 1772–1790 (NDSKVELARGKIEHHTDKK) has biased composition (basic and acidic residues). Lys1804 is covalently cross-linked (Glycyl lysine isopeptide (Lys-Gly) (interchain with G-Cter in SUMO2)). The segment covering 1806-1818 (DSFSQVGPGSETV) has biased composition (polar residues). Residues 1819–1831 (TQKDLKTMPERHL) show a composition bias toward basic and acidic residues. Ser1864 carries the phosphoserine modification. Over residues 1870–1885 (AELKDSEPDEKRRKTQ) the composition is skewed to basic and acidic residues. The Matrin-type zinc finger occupies 1876-1906 (EPDEKRRKTQDSSVGKSMTSDVPGDLDFLVP). The segment covering 1886–1895 (DSSVGKSMTS) has biased composition (polar residues). A compositionally biased stretch (basic and acidic residues) spans 1936–1960 (QNTEKFMAKQRKEKEQNETEERSSR).

Interacts with FHL2. Interacts with CEBPA, CEBPD and CEBPG. Interacts with MPHOSPH8 and TASOR components of the HUSH complex; leading to recruitment of the HUSH complex. Interacts with SETDB1. Interacts with HDAC1. Interacts with HDAC4.

Its subcellular location is the nucleus speckle. In terms of biological role, transcription factor that binds to cytidine clusters in double-stranded DNA. Plays a key role in the silencing of unintegrated retroviral DNA: some part of the retroviral DNA formed immediately after infection remains unintegrated in the host genome and is transcriptionally repressed. Mediates transcriptional repression of unintegrated viral DNA by specifically binding to the cytidine clusters of retroviral DNA and mediating the recruitment of chromatin silencers, such as the HUSH complex, SETDB1 and the histone deacetylases HDAC1 and HDAC4. Acts as an early regulator of adipogenesis by acting as a transcription cofactor of CEBPs (CEBPA, CEBPD and/or CEBPG), controlling the expression of PPARG and probably of other proadipogenic genes, such as SREBF1. May also regulate alternative splicing of target genes during adipogenesis. The chain is Zinc finger protein 638 from Mus musculus (Mouse).